Consider the following 218-residue polypeptide: Twisted gastrulation protein homolog 1-B (218 aa).

Residues 1–25 (MKPSFLHIPAAALLLCSLWILPIHC) form the signal peptide. N-linked (GlcNAc...) asparagine glycans are attached at residues Asn-52, Asn-81, and Asn-147.

It belongs to the twisted gastrulation protein family. In terms of assembly, binds directly to bmp2, bmp4 and bmp7 and can form a ternary complex with bmps and chordin, thus preventing the binding of bmps to their cell surface receptors.

The protein localises to the secreted. Its function is as follows. Involved in dorsal-ventral patterning, permitting peak BMP signaling by antagonizing the residual anti-BMP activity of the cleavage products of chrd. Functions to promote the formation of ventral mesoderm by increasing the activity of bmp7 and other BMPS. Seems to antagonize BMP signaling by forming ternary complexes with chrd and BMPs, thereby preventing BMPs from binding to their receptors. In addition to the anti-BMP function, also has pro-BMP activity, partly mediated by cleavage and degradation of chrd, which releases BMPs from ternary complexes. May be an important modulator of BMP-regulated cartilage development and chondrocyte differentiation. The chain is Twisted gastrulation protein homolog 1-B (twsg1-b) from Xenopus laevis (African clawed frog).